Consider the following 239-residue polypeptide: Probable transcriptional regulatory protein BBR47_14810 (239 aa).

The protein belongs to the TACO1 family. YeeN subfamily.

The protein resides in the cytoplasm. In Brevibacillus brevis (strain 47 / JCM 6285 / NBRC 100599), this protein is Probable transcriptional regulatory protein BBR47_14810.